A 622-amino-acid polypeptide reads, in one-letter code: MSRIPTRELGRYLLQGQICQRGCVASSVSKSRAKQLGRHPLLPHDRHQPTQARHAHTVTTTATPTQLAPSVPLRKKLKDEAKQLKKNAKKDNRKGSNQTVDGWELTVGIEIHAQLNTARKLFSPAATSFNDAPNSHVALFDLSMPGSQPLLQKETLIPALRAALALNCDIQPISRFDRKHYFWWDQPSGYQITQYYEPFARNGQITLFARDGIAPEDGESVTIGIQQVQMEQDTAKTLAQPGDTHWLDFNRVGVPLIEIITKPELHHPRTAAVFVRKMQTLLNAVDACVSGMETGGLRADVNVSVRRTSDASAPLGTRTEIKNLSTIKAVEDAIIAERDRQIQELEAGGTIAGETRGWTLGTKQTRRLRGKEGEVDYRYMPDPDLGPLIIADDLVDHIRKSVAYLPDHELSELADVYGLTAKDALSLLSLDNGGRIEYFYNVVESFGTRLQQGTEGGLDVRAYAPLAANWILHEFGRLVDDDSDNESTPFEVSPDGQCERVPVESLAELLFHLQQKKITGKVAKELLTALHQGNLADAENITAAIDAHDLWFHELSTEEYQELAALAVEGEDKVLREFRDKKVFPQGKLMYLVGKMLRLGATERIDPSNAEKFMRAKVEELL.

The transit peptide at 1-54 (MSRIPTRELGRYLLQGQICQRGCVASSVSKSRAKQLGRHPLLPHDRHQPTQARH) directs the protein to the mitochondrion. The segment at 30 to 67 (KSRAKQLGRHPLLPHDRHQPTQARHAHTVTTTATPTQL) is disordered. The span at 57 to 67 (TVTTTATPTQL) shows a compositional bias: low complexity.

It belongs to the GatB/GatE family. GatB subfamily. As to quaternary structure, subunit of the heterotrimeric GatCAB amidotransferase (AdT) complex, composed of A, B and C subunits.

It is found in the mitochondrion. The enzyme catalyses L-glutamyl-tRNA(Gln) + L-glutamine + ATP + H2O = L-glutaminyl-tRNA(Gln) + L-glutamate + ADP + phosphate + H(+). In terms of biological role, allows the formation of correctly charged Gln-tRNA(Gln) through the transamidation of misacylated Glu-tRNA(Gln) in the mitochondria. The reaction takes place in the presence of glutamine and ATP through an activated gamma-phospho-Glu-tRNA(Gln). In Verticillium alfalfae (strain VaMs.102 / ATCC MYA-4576 / FGSC 10136) (Verticillium wilt of alfalfa), this protein is Glutamyl-tRNA(Gln) amidotransferase subunit B, mitochondrial.